The chain runs to 103 residues: Large ribosomal subunit protein bL21 (103 aa).

This sequence belongs to the bacterial ribosomal protein bL21 family. As to quaternary structure, part of the 50S ribosomal subunit. Contacts protein L20.

This protein binds to 23S rRNA in the presence of protein L20. This is Large ribosomal subunit protein bL21 from Borreliella burgdorferi (strain ZS7) (Borrelia burgdorferi).